The following is a 187-amino-acid chain: MHNEQVQGLVSHDGMTGTQAVDDMSRGFAFTSKLDAIVAWGRKNSLWPMPYGTACCGIEFMSVMGPKYDLARFGAEVARFSPRQADLLVVAGTITEKMAPVIVRIYQQMLEPKYVLSMGACASSGGFYRAYHVLQGVDKVIPVDVYIPGCPPTPEAVMDGIMALQRMIATNQPRPWKDNWKSPYEQA.

Positions 55, 56, 121, and 150 each coordinate [4Fe-4S] cluster.

It belongs to the complex I 20 kDa subunit family. In terms of assembly, NDH-1 is composed of 14 different subunits. Subunits NuoB, C, D, E, F, and G constitute the peripheral sector of the complex. [4Fe-4S] cluster is required as a cofactor.

It localises to the cell inner membrane. It carries out the reaction a quinone + NADH + 5 H(+)(in) = a quinol + NAD(+) + 4 H(+)(out). In terms of biological role, NDH-1 shuttles electrons from NADH, via FMN and iron-sulfur (Fe-S) centers, to quinones in the respiratory chain. The immediate electron acceptor for the enzyme in this species is believed to be ubiquinone. Couples the redox reaction to proton translocation (for every two electrons transferred, four hydrogen ions are translocated across the cytoplasmic membrane), and thus conserves the redox energy in a proton gradient. This is NADH-quinone oxidoreductase subunit B from Bdellovibrio bacteriovorus (strain ATCC 15356 / DSM 50701 / NCIMB 9529 / HD100).